The primary structure comprises 84 residues: Probable cyclin-dependent kinases regulatory subunit (84 aa).

It belongs to the CKS family. Monomer in solution; may form a homohexamer that can probably bind six kinase subunits.

Functionally, binds to the catalytic subunit of the cyclin dependent kinases and is essential for their biological function. This Physarum polycephalum (Slime mold) protein is Probable cyclin-dependent kinases regulatory subunit.